A 245-amino-acid chain; its full sequence is Protein canopy homolog 4 (245 aa).

Residues 1–27 form the signal peptide; it reads MCGLRFIMGPVRLEILLFILAAYGAWA. 3 cysteine pairs are disulfide-bonded: Cys44/Cys202, Cys47/Cys190, and Cys100/Cys162. The interval 207-245 is disordered; the sequence is WTGKEKISDGQEEADDEEEEEEEEITKTSGNPKHDPEDL. Positions 209 to 237 form a coiled coil; the sequence is GKEKISDGQEEADDEEEEEEEEITKTSGN. Positions 216 to 230 are enriched in acidic residues; the sequence is GQEEADDEEEEEEEE.

The protein belongs to the canopy family. Interacts with TLR4. As to expression, highly expressed in lung, spleen, thymus, and uterus. Moderately expressed in kidney, stomach and placenta. Weakly expressed in brain, heart, liver, small intestine, skeletal muscle and testis.

The protein resides in the secreted. Its function is as follows. Plays a role in the regulation of the cell surface expression of TLR4. In Mus musculus (Mouse), this protein is Protein canopy homolog 4 (Cnpy4).